The following is a 183-amino-acid chain: Photosystem I assembly protein Ycf4 (183 aa).

Transmembrane regions (helical) follow at residues 17 to 39 (NYLL…FLSY) and 59 to 81 (FIPQ…IYIY).

The protein belongs to the Ycf4 family.

The protein localises to the plastid. It localises to the chloroplast thylakoid membrane. In terms of biological role, seems to be required for the assembly of the photosystem I complex. The chain is Photosystem I assembly protein Ycf4 from Cyanidium caldarium (Red alga).